The primary structure comprises 373 residues: Mannitol-1-phosphate 5-dehydrogenase (373 aa).

3–14 (ALHFGAGNIGRG) is a binding site for NAD(+).

The protein belongs to the mannitol dehydrogenase family.

The catalysed reaction is D-mannitol 1-phosphate + NAD(+) = beta-D-fructose 6-phosphate + NADH + H(+). This chain is Mannitol-1-phosphate 5-dehydrogenase, found in Bacillus pumilus (strain SAFR-032).